Here is a 406-residue protein sequence, read N- to C-terminus: Homocysteine-responsive endoplasmic reticulum-resident ubiquitin-like domain member 2 protein (406 aa).

The Ubiquitin-like domain maps to 10 to 89; that stretch reads VTLIIKAPNQ…HMVHLVCTSR (80 aa). Residues 86 to 156 are disordered; sequence CTSRTPPSSP…PQAQTDPAQS (71 aa). 2 stretches are compositionally biased toward low complexity: residues 87-98 and 109-139; these read TSRTPPSSPKSS and SNSN…SSSE. A compositionally biased stretch (polar residues) spans 145–156; that stretch reads TLPQAQTDPAQS. Residues 302 to 322 traverse the membrane as a helical segment; it reads FIMVMGAMLLVYLHQAGWFPF.

It localises to the membrane. Its function is as follows. Could be involved in the unfolded protein response (UPR) pathway. In Bos taurus (Bovine), this protein is Homocysteine-responsive endoplasmic reticulum-resident ubiquitin-like domain member 2 protein (HERPUD2).